The chain runs to 148 residues: SPbeta prophage-derived disulfide bond formation protein B (148 aa).

The helical transmembrane segment at 7–26 (KSFFLLLFFLSFFGTMASLF) threads the bilayer. A disulfide bridge connects residues Cys36 and Cys39. The next 2 membrane-spanning stretches (helical) occupy residues 41–60 (YQRI…LLKK) and 67–84 (YVVF…YHYI). Cysteines 95 and 102 form a disulfide. Residues 111–135 (GFITLPLMSSVCFALIFGIGLKLII) traverse the membrane as a helical segment.

Belongs to the DsbB family. BdbC subfamily.

It is found in the cell membrane. Its function is as follows. Important but not absolutely essential for the production of the lantibiotic sublancin 168, it may also be required for the stability of other secreted proteins. Not required for competence for DNA uptake. This is SPbeta prophage-derived disulfide bond formation protein B (bdbB) from Bacillus subtilis (strain 168).